The sequence spans 603 residues: Nuclear receptor subfamily 2 group C member 1 (603 aa).

Positions 1 to 178 are required for interaction with KAT2B; the sequence is MATIEEIAHQ…RLQRCIAFGM (178 aa). A DNA-binding region (nuclear receptor) is located at residues 110-185; that stretch reads FDLCVVCGDK…FGMKQDSVQC (76 aa). 2 consecutive NR C4-type zinc fingers follow at residues 113–133 and 149–168; these read CVVC…CEGC and CRGS…CQYC. Serine 197 and serine 215 each carry phosphoserine. Position 220 is a phosphothreonine (threonine 220). The residue at position 222 (threonine 222) is a Phosphothreonine; by MAPK1. Lysine 250 participates in a covalent cross-link: Glycyl lysine isopeptide (Lys-Gly) (interchain with G-Cter in SUMO); alternate. A Glycyl lysine isopeptide (Lys-Gly) (interchain with G-Cter in SUMO2); alternate cross-link involves residue lysine 250. The 243-residue stretch at 348–590 folds into the NR LBD domain; it reads GSVHLITGDS…SVIPHILKME (243 aa). Serine 581 is modified (phosphoserine; by PKC). Residues 584–603 are required for interaction with NRIP1; the sequence is PHILKMEPADYNSQIIGHSI. Lysine 588 participates in a covalent cross-link: Glycyl lysine isopeptide (Lys-Gly) (interchain with G-Cter in SUMO2).

This sequence belongs to the nuclear hormone receptor family. NR2 subfamily. In terms of assembly, homodimer. Heterodimer; binds DNA as a heterodimer with NR2C2 required for chromatin remodeling and for binding to promoter regions such as globin DR1 repeats. Interacts with ESR1; the interaction prevents homodimerization of ESR1 and suppresses its transcriptional activity and cell growth. Interacts with NRIP1 (via its LXXLL motifs); the interaction provides corepressor activity. Interacts with HDAC3 (via the DNA-binding domain). Interacts with HDAC4 (via the DNA-binding domain). Interacts with PIAS1; the interaction is required for sumoylation of NR2C1. Interacts with UBE2I; the interaction is required for sumoylation of NR2C1. Interacts with KAT2B; the interaction acts as a corepressor of gene expression. Sumoylation requires both PIAS1 and UBE2I. Sumoylation appears to dissociate NR2C1 from the PML nuclear bodies. Enhances the interaction with NRIP1 but inhibits interaction with KAT2B. In proliferating cells, stimulation by all-trans retinoic acid, activation of MAPK1-mediated phosphorylation and recruitment to PML bodies with subsequent sumoylation, suppresses OCT4 expression. In terms of processing, phosphorylated on several serine and threonine residues. Phosphorylation on Thr-220, stimulated by all-trans retinoic acid (atRA) mediates PML location and sumoylation in proliferating cells which then modulates its association with effector molecules, KAT2B and NRIP1. Phosphorylation on Ser-581 by PKC is important for protein stability and function as activator of RARB.

Its subcellular location is the nucleus. The protein localises to the PML body. Functionally, orphan nuclear receptor. Binds the IR7 element in the promoter of its own gene in an autoregulatory negative feedback mechanism. Primarily repressor of a broad range of genes. Binds to hormone response elements (HREs) consisting of two 5'-AGGTCA-3' half site direct repeat consensus sequences. Together with NR2C2, forms the core of the DRED (direct repeat erythroid-definitive) complex that represses embryonic and fetal globin transcription. Also activator of OCT4 gene expression. May be involved in stem cell proliferation and differentiation. Mediator of retinoic acid-regulated preadipocyte proliferation. This chain is Nuclear receptor subfamily 2 group C member 1 (NR2C1), found in Macaca fascicularis (Crab-eating macaque).